A 510-amino-acid polypeptide reads, in one-letter code: Leucine-rich repeat-containing protein 14B (510 aa).

The stretch at 100–137 is one LRR 1; degenerate repeat; sequence SNRLRVADFTGIQDVQVQQCPCGRALGRWGRTKVLART. The LRR 2; degenerate repeat unit spans residues 181–205; sequence QVCCPSLRADSLSPGQLLQVLGLAG. The stretch at 234–273 is one LRR 4; degenerate repeat; that stretch reads FPQLTSLTLPTKAFDAPPTCAPDPEGEDLLLTSIAWELSQ. LRR repeat units lie at residues 274 to 298, 299 to 330, 331 to 349, 355 to 382, and 383 to 407; these read MNQL…LSPL, KTPL…AHLE, VLDL…TFFR, AQTL…GLSP, and CSQL…LFAA.

The protein belongs to the PRAME family. LRRC14 subfamily.

This is Leucine-rich repeat-containing protein 14B from Mus musculus (Mouse).